Here is a 490-residue protein sequence, read N- to C-terminus: One cut domain family member 3 (490 aa).

Disordered regions lie at residues G130–A155, L193–P213, and H287–E316. Over residues A143–Q152 the composition is skewed to pro residues. Gly residues predominate over residues H290–A311. Positions P309–A395 form a DNA-binding region, CUT. The homeobox DNA-binding region spans P411 to W470.

This sequence belongs to the CUT homeobox family. In terms of tissue distribution, specifically expressed in brain, stomach and gut. Within the gut, expressed only in duodenum and jejunum.

It is found in the nucleus. Functionally, transcriptional activator. Binds the consensus DNA sequence 5'-DHWATTGAYTWWD-3' on a variety of gene promoters such as those of HNF3B and TTR. The protein is One cut domain family member 3 (Onecut3) of Mus musculus (Mouse).